The following is a 569-amino-acid chain: Proline--tRNA ligase (569 aa).

This sequence belongs to the class-II aminoacyl-tRNA synthetase family. ProS type 1 subfamily. In terms of assembly, homodimer.

The protein localises to the cytoplasm. It carries out the reaction tRNA(Pro) + L-proline + ATP = L-prolyl-tRNA(Pro) + AMP + diphosphate. In terms of biological role, catalyzes the attachment of proline to tRNA(Pro) in a two-step reaction: proline is first activated by ATP to form Pro-AMP and then transferred to the acceptor end of tRNA(Pro). As ProRS can inadvertently accommodate and process non-cognate amino acids such as alanine and cysteine, to avoid such errors it has two additional distinct editing activities against alanine. One activity is designated as 'pretransfer' editing and involves the tRNA(Pro)-independent hydrolysis of activated Ala-AMP. The other activity is designated 'posttransfer' editing and involves deacylation of mischarged Ala-tRNA(Pro). The misacylated Cys-tRNA(Pro) is not edited by ProRS. The protein is Proline--tRNA ligase of Campylobacter jejuni subsp. doylei (strain ATCC BAA-1458 / RM4099 / 269.97).